A 568-amino-acid polypeptide reads, in one-letter code: Protein yellow (568 aa).

The first 28 residues, 1–28 (MHAQDKGGILPALSLLLIAVAMVSPSQA), serve as a signal peptide directing secretion. Residues asparagine 151 and asparagine 222 are each glycosylated (N-linked (GlcNAc...) asparagine).

The protein belongs to the major royal jelly protein family.

The protein resides in the secreted. Functionally, controls the pigmentation pattern of the adult cuticle and larval mouth parts. This chain is Protein yellow (y), found in Drosophila madeirensis (Fruit fly).